Consider the following 233-residue polypeptide: NAD(P)H-hydrate epimerase (233 aa).

Positions 15 to 218 (SQQFDVELMS…KLQEKYNFIV (204 aa)) constitute a YjeF N-terminal domain. 67–71 (NNGGD) is a (6S)-NADPHX binding site. K(+)-binding residues include Asn-68 and Asp-128. Residues 132–138 (GFSFKPP), Tyr-143, and Asp-161 contribute to the (6S)-NADPHX site. Ser-164 lines the K(+) pocket.

This sequence belongs to the NnrE/AIBP family. K(+) serves as cofactor.

The enzyme catalyses (6R)-NADHX = (6S)-NADHX. The catalysed reaction is (6R)-NADPHX = (6S)-NADPHX. Its function is as follows. Catalyzes the epimerization of the S- and R-forms of NAD(P)HX, a damaged form of NAD(P)H that is a result of enzymatic or heat-dependent hydration. This is a prerequisite for the S-specific NAD(P)H-hydrate dehydratase to allow the repair of both epimers of NAD(P)HX. This Paramecium tetraurelia protein is NAD(P)H-hydrate epimerase.